Here is a 76-residue protein sequence, read N- to C-terminus: Probable small nuclear ribonucleoprotein G (76 aa).

The Sm domain occupies 4 to 76 (AHPPEVKKYM…IVMVEALDRV (73 aa)).

The protein belongs to the snRNP Sm proteins family. In terms of assembly, interacts with the SMN complex. Core component of the spliceosomal U1, U2, U4 and U5 small nuclear ribonucleoproteins (snRNPs), the building blocks of the spliceosome. Most spliceosomal snRNPs contain a common set of Sm proteins, SNRPB, SNRPD1, SNRPD2, SNRPD3, SNRPE, SNRPF and SNRPG that assemble in a heptameric protein ring on the Sm site of the small nuclear RNA to form the core snRNP. Component of the U1 snRNP. Component of the U4/U6-U5 tri-snRNP complex. Component of the U7 snRNP complex. Component of the U11/U12 snRNPs that are part of the U12-type spliceosome.

Its subcellular location is the cytoplasm. The protein localises to the cytosol. It localises to the nucleus. Plays a role in pre-mRNA splicing as a core component of the spliceosomal U1, U2, U4 and U5 small nuclear ribonucleoproteins (snRNPs), the building blocks of the spliceosome. Component of both the pre-catalytic spliceosome B complex and activated spliceosome C complexes. Is also a component of the minor U12 spliceosome. This is Probable small nuclear ribonucleoprotein G from Drosophila melanogaster (Fruit fly).